We begin with the raw amino-acid sequence, 348 residues long: tRNA pseudouridine synthase B (348 aa).

The active-site Nucleophile is aspartate 52.

Belongs to the pseudouridine synthase TruB family. Type 1 subfamily.

It catalyses the reaction uridine(55) in tRNA = pseudouridine(55) in tRNA. In terms of biological role, responsible for synthesis of pseudouridine from uracil-55 in the psi GC loop of transfer RNAs. This is tRNA pseudouridine synthase B from Rhodopirellula baltica (strain DSM 10527 / NCIMB 13988 / SH1).